The chain runs to 252 residues: Orotidine 5'-phosphate decarboxylase (252 aa).

Substrate contacts are provided by residues Asp-26, Lys-48, 75–84 (DLKFHDIPNT), Thr-135, Arg-196, Gln-205, Gly-225, and Arg-226. Residue Lys-77 is the Proton donor of the active site.

The protein belongs to the OMP decarboxylase family. Type 1 subfamily. As to quaternary structure, homodimer.

The catalysed reaction is orotidine 5'-phosphate + H(+) = UMP + CO2. It functions in the pathway pyrimidine metabolism; UMP biosynthesis via de novo pathway; UMP from orotate: step 2/2. Its function is as follows. Catalyzes the decarboxylation of orotidine 5'-monophosphate (OMP) to uridine 5'-monophosphate (UMP). The sequence is that of Orotidine 5'-phosphate decarboxylase from Sodalis glossinidius (strain morsitans).